Here is a 392-residue protein sequence, read N- to C-terminus: Galactokinase (392 aa).

Alpha-D-galactose-binding residues include Arg-37, Glu-43, His-44, and Asp-46. ATP-binding residues include Gly-136, Gly-138, Ser-140, and Ser-141. Asp-186 is a binding site for alpha-D-galactose. The active-site Proton acceptor is the Asp-186. Ser-230 bears the Phosphoserine mark. Tyr-236 serves as a coordination point for alpha-D-galactose.

Belongs to the GHMP kinase family. GalK subfamily. As to quaternary structure, homodimer.

The catalysed reaction is alpha-D-galactose + ATP = alpha-D-galactose 1-phosphate + ADP + H(+). It functions in the pathway carbohydrate metabolism; galactose metabolism. Its function is as follows. Catalyzes the transfer of a phosphate from ATP to alpha-D-galactose and participates in the first committed step in the catabolism of galactose. This Canis lupus familiaris (Dog) protein is Galactokinase (GALK1).